A 406-amino-acid chain; its full sequence is MNQEFLIQLGERACKNAENLTLPAELEGIFFCAPSSRESLATQVFVAIAFVLLMATAIIGNSVVMWIIYQHKVMHYGFNYFLFNMAFADLLIALFNVGTSWTYNLYYDWWYGDLCTLTSFFGIAPTTVSVCSMMALSWDRCQAVVNPLQKRPLSRKRSVIAILIIWVVSTVTALPFAIAASVNSLYTYDVVTSTVSKAHVCSAPVNTFFEKVLFGIQYALPIIILGSTFTRIAVAFRATNEATDSSLKNNHTRAKSKAVKMLFLMVVAFVVCWLPYHIYHAFALEEFFDAARGKYAYLLIYWIAMSSCAYNPIIYCFANERFRIGFRYVFRWIPVIDCKKEQYEYSQLFPDKMRSMAISLQKGRVNSSCLDKKVKENSSQDLVCVMHSEKNTKKYSKVHLLSCHER.

The Extracellular segment spans residues M1–A47. The helical transmembrane segment at I48–I68 threads the bilayer. The Cytoplasmic portion of the chain corresponds to Y69–Y76. A helical membrane pass occupies residues G77–V97. At G98–C115 the chain is on the extracellular side. Residues T116 to L136 form a helical membrane-spanning segment. Topologically, residues S137–S158 are cytoplasmic. A helical transmembrane segment spans residues V159 to A179. Residues A180–P204 are Extracellular-facing. The helical transmembrane segment at V205–L225 threads the bilayer. Topologically, residues G226–M261 are cytoplasmic. Residues L262–F282 traverse the membrane as a helical segment. Residues A283–Y297 are Extracellular-facing. A helical transmembrane segment spans residues L298–A318. At N319 to R406 the chain is on the cytoplasmic side.

This sequence belongs to the G-protein coupled receptor 1 family.

It is found in the cell membrane. Functionally, not known. Putative receptor. The polypeptide is Probable G-protein coupled receptor tkr-1 (tkr-1) (Caenorhabditis elegans).